Reading from the N-terminus, the 104-residue chain is Pterin-4-alpha-carbinolamine dehydratase (104 aa).

N-acetylalanine is present on A2. Substrate contacts are provided by residues 61-63 and 78-81; these read DHH and STHD.

It belongs to the pterin-4-alpha-carbinolamine dehydratase family. As to quaternary structure, homotetramer and homodimer.

It is found in the cytoplasm. The protein localises to the nucleus. It catalyses the reaction (4aS,6R)-4a-hydroxy-L-erythro-5,6,7,8-tetrahydrobiopterin = (6R)-L-erythro-6,7-dihydrobiopterin + H2O. Involved in tetrahydrobiopterin biosynthesis. Seems to both prevent the formation of 7-pterins and accelerate the formation of quinonoid-BH2. Coactivator for HNF1A-dependent transcription. Regulates the dimerization of homeodomain protein HNF1A and enhances its transcriptional activity. Also acts as a coactivator for HNF1B-dependent transcription. The polypeptide is Pterin-4-alpha-carbinolamine dehydratase (pcbd) (Xenopus laevis (African clawed frog)).